Reading from the N-terminus, the 172-residue chain is Small ribosomal subunit protein uS5 (172 aa).

The S5 DRBM domain occupies L17 to V80.

It belongs to the universal ribosomal protein uS5 family. In terms of assembly, part of the 30S ribosomal subunit. Contacts proteins S4 and S8.

With S4 and S12 plays an important role in translational accuracy. Its function is as follows. Located at the back of the 30S subunit body where it stabilizes the conformation of the head with respect to the body. This Burkholderia orbicola (strain AU 1054) protein is Small ribosomal subunit protein uS5.